The sequence spans 655 residues: A-type voltage-gated potassium channel KCND3 (655 aa).

Topologically, residues 1–182 (MAAGVAAWLP…FENPHTSTLA (182 aa)) are cytoplasmic. Positions 6 to 21 (AAWLPFARAAAIGWMP) are interaction with KCNIP1 and KCNIP2. The segment at 70–78 (EKEFFFNED) is interaction with KCNIP1. Zn(2+) is bound by residues His-104, Cys-110, Cys-131, and Cys-132. Ser-153 is modified (phosphoserine). A helical membrane pass occupies residues 183-204 (LVFYYVTGFFIAVSVITNVVET). Residues 205-223 (VPCGTVPGSKELPCGERYS) are Extracellular-facing. A helical transmembrane segment spans residues 224–246 (VAFFCLDTACVMIFTVEYLLRLF). Topologically, residues 247–253 (AAPSRYR) are cytoplasmic. The chain crosses the membrane as a helical span at residues 254–277 (FIRSVMSIIDVVAIMPYYIGLVMT). The Extracellular portion of the chain corresponds to 278-283 (NNEDVS). Residues 284–306 (GAFVTLRVFRVFRIFKFSRHSQG) form a helical; Voltage-sensor membrane-spanning segment. Residues 307–318 (LRILGYTLKSCA) are Cytoplasmic-facing. The chain crosses the membrane as a helical span at residues 319–343 (SELGFLLFSLTMAIIIFATVMFYAE). Residues 344 to 352 (KGSSASKFT) lie on the Extracellular side of the membrane. The segment at residues 353–366 (SIPASFWYTIVTMT) is an intramembrane region (helical). The K(+) site is built by Thr-367, Leu-368, Gly-369, and Tyr-370. The short motif at 367-372 (TLGYGD) is the Selectivity filter element. Residues 367–374 (TLGYGDMV) lie within the membrane without spanning it. A helical membrane pass occupies residues 378 to 400 (IAGKIFGSICSLSGVLVIALPVP). The Cytoplasmic portion of the chain corresponds to 401 to 655 (VIVSNFSRIY…TSNVVKVSAL (255 aa)). At Thr-459 the chain carries Phosphothreonine. The interaction with KCNIP1 and KCNIP2 stretch occupies residues 470–487 (SLIESQHHHLLHCLEKTT). Positions 472 to 487 (IESQHHHLLHCLEKTT) are mediates dendritic targeting. Positions 523-565 (SSMQNYPSTRSPSLSSHSGLTTTCCSRRSKKTTHLPNSNLPAT) are disordered. A compositionally biased stretch (low complexity) spans 529-548 (PSTRSPSLSSHSGLTTTCCS). Ser-569 and Ser-585 each carry phosphoserine. The tract at residues 615–655 (ISIPTPPALTPEGESRPPPASPGPNTNIPSITSNVVKVSAL) is disordered. Over residues 637-655 (GPNTNIPSITSNVVKVSAL) the composition is skewed to polar residues.

The protein belongs to the potassium channel family. D (Shal) (TC 1.A.1.2) subfamily. Kv4.3/KCND3 sub-subfamily. In terms of assembly, homotetramer. Heterotetramer with KCND2. Associates with the regulatory subunit KCNIP3. Associates with the regulatory subunit KCNIP4. Interacts with KCNE1, KCNE2, SCN1B and KCNAB1 and DLG1. Component of heteromultimeric potassium channels. Identified in potassium channel complexes containing KCND1, KCND2, KCND3, KCNIP1, KCNIP2, KCNIP3, KCNIP4, DPP6 and DPP10. Interacts with KCNIP1; each KCNIP1 monomer interacts with two adjacent KCND3 subunits, through both the N-terminal inactivation ball of a KCND3 subunit and a C-terminal helix from the adjacent KCND3 subunit, clamping them together; this interaction stabilizes the tetrameric form and modulates the channel gating kinetics namely channel activation and inactivation kinetics and rate of recovery from inactivation. Interacts with DPP6; this interaction modulates the channel gating kinetics namely channel activation and inactivation kinetics and rate of recovery from inactivation. Interacts with KCNIP2; each KCNIP2 monomer interacts with two adjacent KCND3 subunits, through both the N-terminal inactivation ball of a KCND3 subunit and a C-terminal helix from the adjacent KCND3 subunit, clamping them together; this interaction modulates the channel gating kinetics. Regulated through phosphorylation at Ser-569 by CaMK2D.

Its subcellular location is the cell membrane. It localises to the sarcolemma. It is found in the cell projection. The protein resides in the dendrite. It catalyses the reaction K(+)(in) = K(+)(out). Functionally, pore-forming (alpha) subunit of voltage-gated A-type potassium channels that mediates transmembrane potassium transport in excitable membranes, in brain and heart. In cardiomyocytes, may generate the transient outward potassium current I(To). In neurons, may conduct the transient subthreshold somatodendritic A-type potassium current (ISA). Kinetics properties are characterized by fast activation at subthreshold membrane potentials, rapid inactivation, and quick recovery from inactivation. Channel properties are modulated by interactions with regulatory subunits. Interaction with the regulatory subunits KCNIP1 or KCNIP2 modulates the channel gating kinetics namely channel activation and inactivation kinetics and rate of recovery from inactivation. Likewise, interaction with DPP6 modulates the channel gating kinetics namely channel activation and inactivation kinetics. The chain is A-type voltage-gated potassium channel KCND3 from Mus musculus (Mouse).